A 298-amino-acid polypeptide reads, in one-letter code: Replication protein A 32 kDa subunit B (298 aa).

The segment at residues Val-89–Ile-163 is a DNA-binding region (OB).

It belongs to the replication factor A protein 2 family. As to quaternary structure, heterotrimer of RPA1, RPA2 and RPA3 (canonical replication protein A complex). Interacts with RPA1A and RPA3. In terms of processing, phosphorylated in a cell-cycle-dependent manner (from the S phase until mitosis). In response to DNA damage, recruited to DNA-repair nuclear foci, as a hypophosphorylated form.

Its subcellular location is the nucleus. Functionally, component of the replication protein A complex (RPA) required for DNA recombination, repair and replication. The activity of RPA is mediated by single-stranded DNA binding and protein interactions. In Oryza sativa subsp. japonica (Rice), this protein is Replication protein A 32 kDa subunit B (RPA2B).